We begin with the raw amino-acid sequence, 144 residues long: Cell division protein SepF (144 aa).

Belongs to the SepF family. Homodimer. Interacts with FtsZ.

It localises to the cytoplasm. In terms of biological role, cell division protein that is part of the divisome complex and is recruited early to the Z-ring. Probably stimulates Z-ring formation, perhaps through the cross-linking of FtsZ protofilaments. Its function overlaps with FtsA. This is Cell division protein SepF from Oceanobacillus iheyensis (strain DSM 14371 / CIP 107618 / JCM 11309 / KCTC 3954 / HTE831).